A 166-amino-acid polypeptide reads, in one-letter code: 3-isopropylmalate dehydratase small subunit (166 aa).

This sequence belongs to the LeuD family. LeuD type 2 subfamily. As to quaternary structure, heterodimer of LeuC and LeuD.

The enzyme catalyses (2R,3S)-3-isopropylmalate = (2S)-2-isopropylmalate. The protein operates within amino-acid biosynthesis; L-leucine biosynthesis; L-leucine from 3-methyl-2-oxobutanoate: step 2/4. Its function is as follows. Catalyzes the isomerization between 2-isopropylmalate and 3-isopropylmalate, via the formation of 2-isopropylmaleate. The sequence is that of 3-isopropylmalate dehydratase small subunit from Aliarcobacter butzleri (strain RM4018) (Arcobacter butzleri).